A 362-amino-acid chain; its full sequence is MAAAEEEPKPKKLKVEAPQALRENILFGMGNPLLDISAVVDKDFLDKYSLKPNDQILAEDKHKELFDELVKKFKVEYHAGGSTQNSIKVAQWMIQQPHKAATFFGCIGIDKFGEILKRKAAEAHVDAHYYEQNEQPTGTCAACITGDNRSLIANLAAANCYKKEKHLDLEKNWMLVEKARVCYIAGFFLTVSPESVLKVAHHASENNRIFTLNLSAPFISQFYKESLMKVMPYVDILFGNETEAATFAREQGFETKDIKEIAKKTQALPKMNSKRQRIVIFTQGRDDTIMATESEVTAFAVLDQDQKEIIDTNGAGDAFVGGFLSQLVSDKPLTECIRAGHYAASIIIRRTGCTFPEKPDFH.

A2 carries the post-translational modification N-acetylalanine. Residues 8-16 carry the Nuclear localization signal motif; it reads PKPKKLKVE. D35 contributes to the adenosine binding site. Residue S49 participates in Mg(2+) binding. The residue at position 77 (Y77) is a Phosphotyrosine. Residues D147 and N148 each contribute to the Mg(2+) site. Q306 contacts adenosine. Residue D317 is the Proton acceptor of the active site.

This sequence belongs to the carbohydrate kinase PfkB family. Monomer. It depends on Mg(2+) as a cofactor. Widely expressed. Highest level in placenta, liver, muscle and kidney.

Its subcellular location is the nucleus. It is found in the cytoplasm. The enzyme catalyses adenosine + ATP = AMP + ADP + H(+). The protein operates within purine metabolism; AMP biosynthesis via salvage pathway; AMP from adenosine: step 1/1. With respect to regulation, activity is inhibited by 5-iodotubercidin and 5'-amino-5'-deoxyadenosine. Its function is as follows. Catalyzes the phosphorylation of the purine nucleoside adenosine at the 5' position in an ATP-dependent manner. Serves as a potential regulator of concentrations of extracellular adenosine and intracellular adenine nucleotides. The chain is Adenosine kinase from Homo sapiens (Human).